The sequence spans 307 residues: N-acetylmuramic acid 6-phosphate etherase (307 aa).

Residues 62–225 (IVSSFNRGGR…STASMIRIGK (164 aa)) form the SIS domain. Glutamate 90 acts as the Proton donor in catalysis. Residue glutamate 121 is part of the active site.

It belongs to the GCKR-like family. MurNAc-6-P etherase subfamily. Homodimer.

It carries out the reaction N-acetyl-D-muramate 6-phosphate + H2O = N-acetyl-D-glucosamine 6-phosphate + (R)-lactate. It functions in the pathway amino-sugar metabolism; 1,6-anhydro-N-acetylmuramate degradation. The protein operates within amino-sugar metabolism; N-acetylmuramate degradation. Its pathway is cell wall biogenesis; peptidoglycan recycling. Functionally, specifically catalyzes the cleavage of the D-lactyl ether substituent of MurNAc 6-phosphate, producing GlcNAc 6-phosphate and D-lactate. Together with AnmK, is also required for the utilization of anhydro-N-acetylmuramic acid (anhMurNAc) either imported from the medium or derived from its own cell wall murein, and thus plays a role in cell wall recycling. The chain is N-acetylmuramic acid 6-phosphate etherase from Pseudoalteromonas atlantica (strain T6c / ATCC BAA-1087).